Consider the following 351-residue polypeptide: Nuclear inhibitor of protein phosphatase 1 (351 aa).

The segment at 1–142 (MAAAANSGSS…LPSAVKGDEK (142 aa)) is interaction with CDC5L, SF3B1 and MELK. Residues 49–101 (YLFGRNPDLCDFTIDHQSCSRVHAALVYHKHLKRVFLIDLNSTHGTFLGHIRL) form the FHA domain. The segment at 143–224 (MGGEDDELKG…VDPSVGRFRN (82 aa)) is interaction with EED. Phosphothreonine; by CK2; in vitro is present on threonine 161. At serine 178 the chain carries Phosphoserine; by PKA; in vitro. 2 consecutive short sequence motifs (nuclear localization signal) follow at residues 185-209 (GNLD…DDEI) and 210-240 (INPE…RVEG). An involved in PP-1 inhibition region spans residues 191–200 (RPKRKRKNSR). Serine 199 is subject to Phosphoserine. Positions 200-203 (RVTF) are involved in PP-1 binding. Serine 204 is modified (phosphoserine). Serine 249 carries the post-translational modification Phosphoserine. Tyrosine 264 is modified (phosphotyrosine). Residues 310 to 329 (AVNMNPAPNPAVYNPEAVNE) form an interaction with EED region. The tract at residues 316–351 (APNPAVYNPEAVNEPKKKKYAKEAWPGKKPTPSLLI) is disordered. The interval 330 to 351 (PKKKKYAKEAWPGKKPTPSLLI) is RNA-binding. An involved in PP-1 inhibition region spans residues 331–337 (KKKKYAK). A Phosphotyrosine modification is found at tyrosine 335.

As to quaternary structure, interacts with phosphorylated CDC5L, SF3B1 and MELK. Interacts with EED. Part of a complex consisting of PPP1R8, EED, HDAC2 and PP-1. Part of the spliceosome. Interacts with PPP1CA, PPP1CB and PPP1CC. Post-translationally, the N-terminus is blocked. In terms of processing, inactivated by phosphorylation on Ser-199 or Ser-204.

It localises to the nucleus. Its subcellular location is the nucleus speckle. Inhibitor subunit of the major nuclear protein phosphatase-1 (PP-1). It has RNA-binding activity but does not cleave RNA and may target PP-1 to RNA-associated substrates. May also be involved in pre-mRNA splicing. Binds DNA and might act as a transcriptional repressor. Seems to be required for cell proliferation. This chain is Nuclear inhibitor of protein phosphatase 1 (PPP1R8), found in Bos taurus (Bovine).